Consider the following 117-residue polypeptide: Large ribosomal subunit protein eL34 (117 aa).

A Phosphoserine modification is found at serine 12. N6-acetyllysine is present on residues lysine 36 and lysine 43. A Glycyl lysine isopeptide (Lys-Gly) (interchain with G-Cter in SUMO2) cross-link involves residue lysine 108.

This sequence belongs to the eukaryotic ribosomal protein eL34 family. As to quaternary structure, component of the large ribosomal subunit.

The protein localises to the cytoplasm. Its subcellular location is the cytosol. It is found in the endoplasmic reticulum. Its function is as follows. Component of the large ribosomal subunit. The ribosome is a large ribonucleoprotein complex responsible for the synthesis of proteins in the cell. This chain is Large ribosomal subunit protein eL34 (Rpl34), found in Rattus norvegicus (Rat).